Reading from the N-terminus, the 67-residue chain is Large ribosomal subunit protein bL35 (67 aa).

The protein belongs to the bacterial ribosomal protein bL35 family.

The sequence is that of Large ribosomal subunit protein bL35 from Zymomonas mobilis subsp. mobilis (strain ATCC 31821 / ZM4 / CP4).